Here is a 183-residue protein sequence, read N- to C-terminus: Protein Syd (183 aa).

It belongs to the Syd family.

It is found in the cell inner membrane. Its function is as follows. Interacts with the SecY protein in vivo. May bind preferentially to an uncomplexed state of SecY, thus functioning either as a chelating agent for excess SecY in the cell or as a regulatory factor that negatively controls the translocase function. The protein is Protein Syd of Yersinia pestis bv. Antiqua (strain Antiqua).